The following is a 427-amino-acid chain: 3-phosphoshikimate 1-carboxyvinyltransferase (427 aa).

3 residues coordinate 3-phosphoshikimate: lysine 20, serine 21, and arginine 25. Residue lysine 20 coordinates phosphoenolpyruvate. Phosphoenolpyruvate contacts are provided by glycine 92 and arginine 120. Positions 166, 168, 312, and 339 each coordinate 3-phosphoshikimate. A phosphoenolpyruvate-binding site is contributed by glutamine 168. The active-site Proton acceptor is aspartate 312. The phosphoenolpyruvate site is built by arginine 343 and arginine 385.

It belongs to the EPSP synthase family. Monomer.

Its subcellular location is the cytoplasm. The enzyme catalyses 3-phosphoshikimate + phosphoenolpyruvate = 5-O-(1-carboxyvinyl)-3-phosphoshikimate + phosphate. It participates in metabolic intermediate biosynthesis; chorismate biosynthesis; chorismate from D-erythrose 4-phosphate and phosphoenolpyruvate: step 6/7. Its function is as follows. Catalyzes the transfer of the enolpyruvyl moiety of phosphoenolpyruvate (PEP) to the 5-hydroxyl of shikimate-3-phosphate (S3P) to produce enolpyruvyl shikimate-3-phosphate and inorganic phosphate. The polypeptide is 3-phosphoshikimate 1-carboxyvinyltransferase (Streptococcus thermophilus (strain CNRZ 1066)).